A 252-amino-acid chain; its full sequence is Thiazole synthase (252 aa).

K95 functions as the Schiff-base intermediate with DXP in the catalytic mechanism. 1-deoxy-D-xylulose 5-phosphate contacts are provided by residues G156, A182–G183, and N204–T205.

It belongs to the ThiG family. As to quaternary structure, homotetramer. Forms heterodimers with either ThiH or ThiS.

It localises to the cytoplasm. The catalysed reaction is [ThiS sulfur-carrier protein]-C-terminal-Gly-aminoethanethioate + 2-iminoacetate + 1-deoxy-D-xylulose 5-phosphate = [ThiS sulfur-carrier protein]-C-terminal Gly-Gly + 2-[(2R,5Z)-2-carboxy-4-methylthiazol-5(2H)-ylidene]ethyl phosphate + 2 H2O + H(+). It functions in the pathway cofactor biosynthesis; thiamine diphosphate biosynthesis. Its function is as follows. Catalyzes the rearrangement of 1-deoxy-D-xylulose 5-phosphate (DXP) to produce the thiazole phosphate moiety of thiamine. Sulfur is provided by the thiocarboxylate moiety of the carrier protein ThiS. In vitro, sulfur can be provided by H(2)S. The protein is Thiazole synthase of Shewanella sp. (strain ANA-3).